We begin with the raw amino-acid sequence, 927 residues long: Nuclear factor of activated T-cells, cytoplasmic 2 (927 aa).

The interval 1–29 (MDVPEPQPDPDGGDGPGHEPGGSPQDELD) is disordered. 7 positions are modified to phosphoserine: Ser-23, Ser-53, Ser-54, Ser-56, Ser-99, Ser-107, and Ser-110. Residues 111-116 (PRIEIT) form a calcineurin-binding region. The transactivation domain A (TAD-A) stretch occupies residues 119–201 (HELMQAGGAL…CVSPNNAGPD (83 aa)). Phosphoserine occurs at positions 136, 150, 170, 173, 174, 176, 177, 179, and 182. The interval 163-177 (YREPLCLSPASSGSS) is required for cytoplasmic retention of the phosphorylated form. Tandem repeats lie at residues 186–202 (SPYT…GPDD) and 215–231 (SPRT…LAED). Residues 186–292 (SPYTSPCVSP…PHVALQDDSI (107 aa)) form a 3 X approximate SP repeats region. Disordered stretches follow at residues 203-299 (LCPQ…YPPT) and 322-341 (SKIW…PSKA). 5 positions are modified to phosphoserine: Ser-215, Ser-219, Ser-223, Ser-238, and Ser-245. Positions 216–226 (PRTSPIMSPRT) are enriched in polar residues. Positions 253-255 (KRR) match the Nuclear localization signal motif. 7 positions are modified to phosphoserine: Ser-257, Ser-270, Ser-276, Ser-278, Ser-282, Ser-328, and Ser-365. Low complexity predominate over residues 267 to 277 (PAASPQRSRSP). The 3; approximate repeat unit spans residues 274 to 290 (SRSPSPQPSPHVALQDD). The RHD domain maps to 394–576 (ASLPPLEWPL…NPIECSQRSA (183 aa)). Residues 423–430 (RAHYETEG) mediate DNA binding. A phosphoserine mark is found at Ser-757, Ser-759, and Ser-761. Disordered regions lie at residues 790–812 (AGSQ…QQAS) and 841–903 (FGPS…QNLD). Over residues 798–812 (GSTLPHTSSASQQAS) the composition is skewed to polar residues. A Phosphoserine modification is found at Ser-860.

Member of the multicomponent NFATC transcription complex that consists of at least two components, a pre-existing cytoplasmic component NFATC2 and an inducible nuclear component NFATC1. Other members such as NFATC4, NFATC3 or members of the activating protein-1 family, MAF, GATA4 and Cbp/p300 can also bind the complex. The phosphorylated form specifically interacts with XPO1; which mediates nuclear export. NFATC proteins bind to DNA as monomers. Interacts with NFATC2IP. Interacts with FOXP3. Interacts with TBX21 ('Thr-302' phosphorylated form). Interacts with KAT2A. Interacts with HOMER2 and HOMER3; this interaction competes with calcineurin/PPP3CA-binding and hence prevents NFATC2 dephosphorylation and activation. Interacts with protein phosphatase PPP3CA/calcineurin A. Interacts with AKAP5 (via leucine zipper domain); this is required for NFATC2/NFAT1 recruitment to CRAC channels. Post-translationally, in resting cells, phosphorylated by NFATC-kinase on at least 18 sites in the 99-365 region. Upon cell stimulation, all these sites except Ser-245 are dephosphorylated by calcineurin. Dephosphorylation induces a conformational change that simultaneously exposes an NLS and masks an NES, which results in nuclear localization. Simultaneously, one site among Ser-53; Ser-54 and Ser-56 is phosphorylated; which is required for full transcriptional activity. In terms of processing, ubiquitinated in endothelial cells by RNF213 downstream of the non-canonical Wnt signaling pathway, leading to its degradation by the proteasome. In terms of tissue distribution, expressed in spleen, heart, testis, brain, placenta, muscle and pancreas. Expressed in the thymus. Expressed in the lung. Expressed in cartilage.

It is found in the cytoplasm. It localises to the nucleus. In terms of biological role, plays a role in the inducible expression of cytokine genes in T cells, especially in the induction of the IL-2, IL-3, IL-4, TNF-alpha or GM-CSF. Promotes invasive migration through the activation of GPC6 expression and WNT5A signaling pathway. Is involved in the negative regulation of chondrogenesis. Recruited by AKAP5 to ORAI1 pore-forming subunit of CRAC channels in Ca(2+) signaling microdomains where store-operated Ca(2+) influx is coupled to calmodulin and calcineurin signaling and activation of NFAT-dependent transcriptional responses. In Mus musculus (Mouse), this protein is Nuclear factor of activated T-cells, cytoplasmic 2 (Nfatc2).